We begin with the raw amino-acid sequence, 313 residues long: MSFSKEVKEEITKQMNNARHCRLAEIAALLSACGHVIQKDGEIKSIVLQTENILVARKYFTLLKKTFNINTEILIRKNKAGKNSLLFLLVVKLPKQVSLLYQATKLSLHHELGDKALVVDPIVVQNTCCKRAFVRGLFLAAGSMSDPEKTYHYEIVFPDLERASQLQEIINSFLIDAKIVLRKKYYVVYVKEGSQIVDLLNIMEAHTSLMDFENVRILKEMRNSINRQVNCEAANINKTVTAAAKQIDDILFIRDTIGFDNLTEGLEEIAELRISYPESSLKELGAMLNPPIGKSGVNHRLKKLCSIADGLRQ.

Positions 280-313 (SLKELGAMLNPPIGKSGVNHRLKKLCSIADGLRQ) form a DNA-binding region, H-T-H motif.

This sequence belongs to the WhiA family.

Functionally, involved in cell division and chromosome segregation. In Lachnoclostridium phytofermentans (strain ATCC 700394 / DSM 18823 / ISDg) (Clostridium phytofermentans), this protein is Probable cell division protein WhiA.